Consider the following 73-residue polypeptide: Ubiquitin-like modifier HUB1 (73 aa).

The Ubiquitin-like domain maps to 1-73 (MIEVVVNDRL…DQTNLELYYL (73 aa)).

In terms of biological role, forms conjugate with SPH1 and HBT1. Involved in morphogenesis. The chain is Ubiquitin-like modifier HUB1 (HUB1) from Saccharomyces cerevisiae (strain ATCC 204508 / S288c) (Baker's yeast).